We begin with the raw amino-acid sequence, 345 residues long: uncharacterized protein (345 aa).

A run of 8 helical transmembrane segments spans residues 9–31, 84–103, 116–138, 148–170, 182–204, 269–286, 291–308, and 313–335; these read VVAF…AAFV, TLVA…TYLL, YFSL…ILYT, VPMQ…SGIF, VVFV…TIHA, WFFW…GVLG, ISHY…IAGY, and HGLT…VFFI.

It localises to the cell membrane. This is an uncharacterized protein from Treponema pallidum (strain Nichols).